A 200-amino-acid polypeptide reads, in one-letter code: MPIEFIATSKLPTAFGEFNISVFQDPVTGEEHVALSKGLENPPTGPVLVRVHSECLTGDAFASLKCDCGPQLQATQKLINEAGQGVILYLRQEGRGIGLTNKIRAYALQDQGHDTVDANLLLNLPADARRYDMCSIMLDHLKVKEVKLITNNPLKIQALKDQGINVVDRVPLTVGRNPFNEQYLKTKRERMDHLYQKDDF.

Arg50 to Glu54 is a GTP binding site. Cys55, Cys66, and Cys68 together coordinate Zn(2+). GTP is bound by residues Gln71, Glu93 to Arg95, and Thr115. Asp127 acts as the Proton acceptor in catalysis. Arg129 serves as the catalytic Nucleophile. GTP is bound by residues Thr150 and Lys155.

This sequence belongs to the GTP cyclohydrolase II family. The cofactor is Zn(2+).

The catalysed reaction is GTP + 4 H2O = 2,5-diamino-6-hydroxy-4-(5-phosphoribosylamino)-pyrimidine + formate + 2 phosphate + 3 H(+). The protein operates within cofactor biosynthesis; riboflavin biosynthesis; 5-amino-6-(D-ribitylamino)uracil from GTP: step 1/4. In terms of biological role, catalyzes the conversion of GTP to 2,5-diamino-6-ribosylamino-4(3H)-pyrimidinone 5'-phosphate (DARP), formate and pyrophosphate. This is GTP cyclohydrolase-2 from Acinetobacter baumannii (strain AB307-0294).